Reading from the N-terminus, the 78-residue chain is Acyl carrier protein (78 aa).

The region spanning 2–77 is the Carrier domain; sequence SNIEQQVKKI…LAIDYINAHN (76 aa). Position 37 is an O-(pantetheine 4'-phosphoryl)serine (serine 37).

Belongs to the acyl carrier protein (ACP) family. In terms of processing, 4'-phosphopantetheine is transferred from CoA to a specific serine of apo-ACP by AcpS. This modification is essential for activity because fatty acids are bound in thioester linkage to the sulfhydryl of the prosthetic group.

The protein resides in the cytoplasm. It functions in the pathway lipid metabolism; fatty acid biosynthesis. Carrier of the growing fatty acid chain in fatty acid biosynthesis. The sequence is that of Acyl carrier protein from Neisseria meningitidis serogroup C / serotype 2a (strain ATCC 700532 / DSM 15464 / FAM18).